A 183-amino-acid polypeptide reads, in one-letter code: UPF0397 protein EF_2154 (183 aa).

The next 5 helical transmembrane spans lie at 10–30 (IVAI…VVIP), 44–64 (FLAL…GLIG), 74–94 (GSAW…FGFA), 115–135 (IFQA…LDIL), and 147–167 (QGVF…TLLM).

It belongs to the UPF0397 family.

The protein resides in the cell membrane. The polypeptide is UPF0397 protein EF_2154 (Enterococcus faecalis (strain ATCC 700802 / V583)).